A 301-amino-acid chain; its full sequence is Sulfate adenylyltransferase subunit 2 (301 aa).

Residues 279–301 (RQGRLIDRDEAGSMEKKKREGYF) are disordered.

It belongs to the PAPS reductase family. CysD subfamily. Heterodimer composed of CysD, the smaller subunit, and CysN.

The catalysed reaction is sulfate + ATP + H(+) = adenosine 5'-phosphosulfate + diphosphate. The protein operates within sulfur metabolism; hydrogen sulfide biosynthesis; sulfite from sulfate: step 1/3. In terms of biological role, with CysN forms the ATP sulfurylase (ATPS) that catalyzes the adenylation of sulfate producing adenosine 5'-phosphosulfate (APS) and diphosphate, the first enzymatic step in sulfur assimilation pathway. APS synthesis involves the formation of a high-energy phosphoric-sulfuric acid anhydride bond driven by GTP hydrolysis by CysN coupled to ATP hydrolysis by CysD. The chain is Sulfate adenylyltransferase subunit 2 from Mesorhizobium japonicum (strain LMG 29417 / CECT 9101 / MAFF 303099) (Mesorhizobium loti (strain MAFF 303099)).